The sequence spans 140 residues: UPF0306 protein YhbP (140 aa).

It belongs to the UPF0306 family.

In Escherichia coli O6:H1 (strain CFT073 / ATCC 700928 / UPEC), this protein is UPF0306 protein YhbP.